Here is a 149-residue protein sequence, read N- to C-terminus: Calmodulin (149 aa).

Ala2 carries the N-acetylalanine modification. 4 consecutive EF-hand domains span residues 8–43 (EQIA…LGQN), 44–79 (PTEA…KMKD), 81–116 (DSEE…LGEK), and 117–149 (LTDE…MTSK). The Ca(2+) site is built by Asp21, Asp23, Asp25, Thr27, Glu32, Asp57, Asp59, Asp61, Thr63, Glu68, Asp94, Asp96, Asp98, and Glu105. Lys116 is subject to N6,N6,N6-trimethyllysine. Ca(2+) is bound by residues Asp130, Asp132, Asp134, Gln136, and Glu141.

The protein belongs to the calmodulin family.

Its function is as follows. Calmodulin mediates the control of a large number of enzymes, ion channels and other proteins by Ca(2+). Among the enzymes to be stimulated by the calmodulin-Ca(2+) complex are a number of protein kinases and phosphatases. This Renilla reniformis (Sea pansy) protein is Calmodulin.